We begin with the raw amino-acid sequence, 227 residues long: MSKTFFVTGTDTDAGKTTCTLALLQAAAAKGLKAVAYKPVAAGCEMIENKPCNQDVLLLQKHSALPLQYEQVVAYSFDAFSSPHIAAEESGVTIKLDVLSEGLSRLKKSTGADIIFVEGAGGWRVPIGNGHFLSDWVKYENMPVIMVVGARLGCINHSVLTYEAIHHDMLPLVGWCMNRITPSMNHYQQNLETLKSLLPAPFMGEIPYINKPDEQDLGKYLDISTLL.

Residue 13–18 (DAGKTT) coordinates ATP. Residue T17 participates in Mg(2+) binding. K38 is an active-site residue. ATP contacts are provided by residues D55, 118 to 121 (EGAG), 178 to 179 (NR), 207 to 209 (PYI), and E214. Mg(2+)-binding residues include D55 and E118.

Belongs to the dethiobiotin synthetase family. Homodimer. The cofactor is Mg(2+).

It is found in the cytoplasm. It catalyses the reaction (7R,8S)-7,8-diammoniononanoate + CO2 + ATP = (4R,5S)-dethiobiotin + ADP + phosphate + 3 H(+). Its pathway is cofactor biosynthesis; biotin biosynthesis; biotin from 7,8-diaminononanoate: step 1/2. Catalyzes a mechanistically unusual reaction, the ATP-dependent insertion of CO2 between the N7 and N8 nitrogen atoms of 7,8-diaminopelargonic acid (DAPA, also called 7,8-diammoniononanoate) to form a ureido ring. This chain is ATP-dependent dethiobiotin synthetase BioD, found in Tolumonas auensis (strain DSM 9187 / NBRC 110442 / TA 4).